A 248-amino-acid polypeptide reads, in one-letter code: UDP-2,3-diacylglucosamine hydrolase (248 aa).

Mn(2+) contacts are provided by aspartate 7, histidine 9, aspartate 40, asparagine 78, and histidine 113. Substrate is bound at residue 78-79; that stretch reads NR. Residues aspartate 121, serine 159, threonine 163, lysine 166, and histidine 194 each coordinate substrate. The Mn(2+) site is built by histidine 194 and histidine 196.

It belongs to the LpxH family. The cofactor is Mn(2+).

Its subcellular location is the cell inner membrane. The enzyme catalyses UDP-2-N,3-O-bis[(3R)-3-hydroxytetradecanoyl]-alpha-D-glucosamine + H2O = 2-N,3-O-bis[(3R)-3-hydroxytetradecanoyl]-alpha-D-glucosaminyl 1-phosphate + UMP + 2 H(+). The protein operates within glycolipid biosynthesis; lipid IV(A) biosynthesis; lipid IV(A) from (3R)-3-hydroxytetradecanoyl-[acyl-carrier-protein] and UDP-N-acetyl-alpha-D-glucosamine: step 4/6. Its function is as follows. Hydrolyzes the pyrophosphate bond of UDP-2,3-diacylglucosamine to yield 2,3-diacylglucosamine 1-phosphate (lipid X) and UMP by catalyzing the attack of water at the alpha-P atom. Involved in the biosynthesis of lipid A, a phosphorylated glycolipid that anchors the lipopolysaccharide to the outer membrane of the cell. This Pseudomonas syringae pv. syringae (strain B728a) protein is UDP-2,3-diacylglucosamine hydrolase.